Reading from the N-terminus, the 202-residue chain is ATP synthase subunit b 1 (202 aa).

A helical membrane pass occupies residues 17 to 37 (IAAVLCFSVLVPLVAMAAEGG).

This sequence belongs to the ATPase B chain family. In terms of assembly, F-type ATPases have 2 components, F(1) - the catalytic core - and F(0) - the membrane proton channel. F(1) has five subunits: alpha(3), beta(3), gamma(1), delta(1), epsilon(1). F(0) has three main subunits: a(1), b(2) and c(10-14). The alpha and beta chains form an alternating ring which encloses part of the gamma chain. F(1) is attached to F(0) by a central stalk formed by the gamma and epsilon chains, while a peripheral stalk is formed by the delta and b chains.

It is found in the cell inner membrane. Functionally, f(1)F(0) ATP synthase produces ATP from ADP in the presence of a proton or sodium gradient. F-type ATPases consist of two structural domains, F(1) containing the extramembraneous catalytic core and F(0) containing the membrane proton channel, linked together by a central stalk and a peripheral stalk. During catalysis, ATP synthesis in the catalytic domain of F(1) is coupled via a rotary mechanism of the central stalk subunits to proton translocation. Its function is as follows. Component of the F(0) channel, it forms part of the peripheral stalk, linking F(1) to F(0). The protein is ATP synthase subunit b 1 of Syntrophus aciditrophicus (strain SB).